A 199-amino-acid chain; its full sequence is Protein GrpE (199 aa).

The disordered stretch occupies residues 1-50 (MAKKSTRTTPEDSQASTTDSAATSTASEATQAATSATDDQAEQTTAVDPT). Positions 11 to 46 (EDSQASTTDSAATSTASEATQAATSATDDQAEQTTA) are enriched in low complexity.

It belongs to the GrpE family. In terms of assembly, homodimer.

It is found in the cytoplasm. In terms of biological role, participates actively in the response to hyperosmotic and heat shock by preventing the aggregation of stress-denatured proteins, in association with DnaK and GrpE. It is the nucleotide exchange factor for DnaK and may function as a thermosensor. Unfolded proteins bind initially to DnaJ; upon interaction with the DnaJ-bound protein, DnaK hydrolyzes its bound ATP, resulting in the formation of a stable complex. GrpE releases ADP from DnaK; ATP binding to DnaK triggers the release of the substrate protein, thus completing the reaction cycle. Several rounds of ATP-dependent interactions between DnaJ, DnaK and GrpE are required for fully efficient folding. In Lactiplantibacillus plantarum (strain ATCC BAA-793 / NCIMB 8826 / WCFS1) (Lactobacillus plantarum), this protein is Protein GrpE.